Here is a 357-residue protein sequence, read N- to C-terminus: DNA polymerase IV (357 aa).

The region spanning 4 to 185 is the UmuC domain; sequence IIHVDMDCYF…LSLRQIPGVG (182 aa). Mg(2+) contacts are provided by Asp8 and Asp103. Glu104 is a catalytic residue.

It belongs to the DNA polymerase type-Y family. As to quaternary structure, monomer. Mg(2+) is required as a cofactor.

Its subcellular location is the cytoplasm. The enzyme catalyses DNA(n) + a 2'-deoxyribonucleoside 5'-triphosphate = DNA(n+1) + diphosphate. In terms of biological role, poorly processive, error-prone DNA polymerase involved in untargeted mutagenesis. Copies undamaged DNA at stalled replication forks, which arise in vivo from mismatched or misaligned primer ends. These misaligned primers can be extended by PolIV. Exhibits no 3'-5' exonuclease (proofreading) activity. May be involved in translesional synthesis, in conjunction with the beta clamp from PolIII. The chain is DNA polymerase IV from Shewanella oneidensis (strain ATCC 700550 / JCM 31522 / CIP 106686 / LMG 19005 / NCIMB 14063 / MR-1).